A 436-amino-acid chain; its full sequence is Zinc finger protein 101 (436 aa).

In terms of domain architecture, KRAB spans 4–82 (VAFEDVAVNF…RKEGNEHRET (79 aa)). The C2H2-type 1 zinc-finger motif lies at 102–124 (CKCSVCGKVFLRHSFLDRHMRAH). Residues 128–141 (KRSECGGEWRETPR) are compositionally biased toward basic and acidic residues. The segment at 128–164 (KRSECGGEWRETPRKQKQHGKASISPSSGARRTVTPT) is disordered. Polar residues predominate over residues 151-163 (ISPSSGARRTVTP). Residues 169-191 (YECKVCGKAFNSPNLFQIHQRTH) form a C2H2-type 2 zinc finger. The C2H2-type 3; degenerate zinc finger occupies 197 to 219 (YKCREIVRAFTVSSFFRKHGKMH). C2H2-type zinc fingers lie at residues 225–247 (YECK…VRTH), 253–276 (YKCK…IRSH), 282–304 (HQCQ…ERTH), 310–332 (YECQ…ERAH), 338–360 (YECN…KKTH), 366–388 (YECT…EMTH), and 394–416 (FDCK…ERTH).

Belongs to the krueppel C2H2-type zinc-finger protein family. In terms of tissue distribution, expressed in a variety of adult and fetal tissues.

It localises to the nucleus. In terms of biological role, may be involved in transcriptional regulation. The sequence is that of Zinc finger protein 101 (ZNF101) from Homo sapiens (Human).